Consider the following 253-residue polypeptide: Neurotrophin-3 (253 aa).

Positions 1 to 18 (MSILFYVMFLAYLRGVQG) are cleaved as a signal peptide. Residues 19-134 (NSMDQRSLPE…AANRTSRRKR (116 aa)) constitute a propeptide that is removed on maturation. The disordered stretch occupies residues 62–89 (TLPKAEAPPREPAKSEFQPVTAMGPELL). Residue Asn127 is glycosylated (N-linked (GlcNAc...) asparagine). 3 disulfides stabilise this stretch: Cys148–Cys213, Cys191–Cys242, and Cys201–Cys244.

Belongs to the NGF-beta family.

The protein resides in the secreted. In terms of biological role, seems to promote the survival of visceral and proprioceptive sensory neurons. This Bos taurus (Bovine) protein is Neurotrophin-3 (NTF3).